A 319-amino-acid chain; its full sequence is UDP-3-O-acylglucosamine N-acyltransferase (319 aa).

The active-site Proton acceptor is histidine 230.

It belongs to the transferase hexapeptide repeat family. LpxD subfamily. In terms of assembly, homotrimer.

The catalysed reaction is a UDP-3-O-[(3R)-3-hydroxyacyl]-alpha-D-glucosamine + a (3R)-hydroxyacyl-[ACP] = a UDP-2-N,3-O-bis[(3R)-3-hydroxyacyl]-alpha-D-glucosamine + holo-[ACP] + H(+). It functions in the pathway bacterial outer membrane biogenesis; LPS lipid A biosynthesis. In terms of biological role, catalyzes the N-acylation of UDP-3-O-acylglucosamine using 3-hydroxyacyl-ACP as the acyl donor. Is involved in the biosynthesis of lipid A, a phosphorylated glycolipid that anchors the lipopolysaccharide to the outer membrane of the cell. The chain is UDP-3-O-acylglucosamine N-acyltransferase from Campylobacter lari (strain RM2100 / D67 / ATCC BAA-1060).